Consider the following 235-residue polypeptide: uncharacterized protein (235 aa).

The region spanning 2 to 235 (IKLKNVTKTY…EEKLRGFDDR (234 aa)) is the ABC transporter domain. 38-45 (GPSGSGKS) is a binding site for ATP.

Belongs to the ABC transporter superfamily.

This is an uncharacterized protein from Methanocaldococcus jannaschii (strain ATCC 43067 / DSM 2661 / JAL-1 / JCM 10045 / NBRC 100440) (Methanococcus jannaschii).